The chain runs to 802 residues: Penicillin G acylase (802 aa).

A signal peptide spans 1-26; sequence MKMKWLISVIILFVFIFPQNLVFAGE. E177 contacts Ca(2+). The propeptide at 235 to 265 is spacer peptide; that stretch reads SAVIKASEKVGKERENFVQSSEELGLPLKIG. S266 (nucleophile) is an active-site residue. Position 341 (D341) interacts with Ca(2+).

It belongs to the peptidase S45 family. Heterodimer of an alpha subunit and a beta subunit processed from the same precursor. Ca(2+) serves as cofactor.

It is found in the secreted. The catalysed reaction is a penicillin + H2O = 6-aminopenicillanate + a carboxylate. The chain is Penicillin G acylase (pac) from Rhizobium viscosum (Arthrobacter viscosus).